The sequence spans 95 residues: Large ribosomal subunit protein bL25 (95 aa).

The protein belongs to the bacterial ribosomal protein bL25 family. In terms of assembly, part of the 50S ribosomal subunit; part of the 5S rRNA/L5/L18/L25 subcomplex. Contacts the 5S rRNA. Binds to the 5S rRNA independently of L5 and L18.

Functionally, this is one of the proteins that binds to the 5S RNA in the ribosome where it forms part of the central protuberance. The sequence is that of Large ribosomal subunit protein bL25 from Shewanella piezotolerans (strain WP3 / JCM 13877).